Consider the following 353-residue polypeptide: Fe(3+) ions import ATP-binding protein FbpC (353 aa).

The ABC transporter domain occupies 9-239; it reads VVFENVRKTF…PASSFIADFM (231 aa). An ATP-binding site is contributed by 41 to 48; that stretch reads GPSGCGKT.

The protein belongs to the ABC transporter superfamily. Fe(3+) ion importer (TC 3.A.1.10) family. In terms of assembly, the complex is composed of two ATP-binding proteins (FbpC), two transmembrane proteins (FbpB) and a solute-binding protein (FbpA).

The protein localises to the cell inner membrane. The catalysed reaction is Fe(3+)(out) + ATP + H2O = Fe(3+)(in) + ADP + phosphate + H(+). Its function is as follows. Part of the ABC transporter complex FbpABC involved in Fe(3+) ions import. Responsible for energy coupling to the transport system. The chain is Fe(3+) ions import ATP-binding protein FbpC from Agrobacterium fabrum (strain C58 / ATCC 33970) (Agrobacterium tumefaciens (strain C58)).